The following is a 205-amino-acid chain: Holliday junction resolvase RecU (205 aa).

The segment at 1-22 (MAINYPAGTRRRTAQAKNTMRT) is disordered. Residues threonine 90, aspartate 92, aspartate 105, and glutamine 124 each coordinate Mg(2+).

Belongs to the RecU family. Mg(2+) serves as cofactor.

It localises to the cytoplasm. It carries out the reaction Endonucleolytic cleavage at a junction such as a reciprocal single-stranded crossover between two homologous DNA duplexes (Holliday junction).. Endonuclease that resolves Holliday junction intermediates in genetic recombination. Cleaves mobile four-strand junctions by introducing symmetrical nicks in paired strands. Promotes annealing of linear ssDNA with homologous dsDNA. Required for DNA repair, homologous recombination and chromosome segregation. The polypeptide is Holliday junction resolvase RecU (Leuconostoc citreum (strain KM20)).